A 506-amino-acid polypeptide reads, in one-letter code: AMP phosphorylase (506 aa).

Residues Gly167, 193–198 (SRAITG), and Thr202 contribute to the AMP site. The active-site Proton donor is the Asp255. Ser263 and Lys287 together coordinate AMP.

It belongs to the thymidine/pyrimidine-nucleoside phosphorylase family. Type 2 subfamily.

The enzyme catalyses AMP + phosphate = alpha-D-ribose 1,5-bisphosphate + adenine. It carries out the reaction CMP + phosphate = cytosine + alpha-D-ribose 1,5-bisphosphate. It catalyses the reaction UMP + phosphate = alpha-D-ribose 1,5-bisphosphate + uracil. In terms of biological role, catalyzes the conversion of AMP and phosphate to adenine and ribose 1,5-bisphosphate (R15P). Exhibits phosphorylase activity toward CMP and UMP in addition to AMP. Functions in an archaeal AMP degradation pathway, together with R15P isomerase and RubisCO. The chain is AMP phosphorylase from Methanosarcina barkeri (strain Fusaro / DSM 804).